Reading from the N-terminus, the 467-residue chain is UDP-N-acetylmuramate--L-alanine ligase (467 aa).

114–120 serves as a coordination point for ATP; that stretch reads GTHGKTT.

Belongs to the MurCDEF family.

It localises to the cytoplasm. It carries out the reaction UDP-N-acetyl-alpha-D-muramate + L-alanine + ATP = UDP-N-acetyl-alpha-D-muramoyl-L-alanine + ADP + phosphate + H(+). Its pathway is cell wall biogenesis; peptidoglycan biosynthesis. Cell wall formation. This Chlorobium chlorochromatii (strain CaD3) protein is UDP-N-acetylmuramate--L-alanine ligase.